The sequence spans 245 residues: Biosynthetic peptidoglycan transglycosylase (245 aa).

A helical transmembrane segment spans residues 24–44 (LVVIGAWLAGILLFSFLPVPF).

It belongs to the glycosyltransferase 51 family.

The protein resides in the cell inner membrane. It carries out the reaction [GlcNAc-(1-&gt;4)-Mur2Ac(oyl-L-Ala-gamma-D-Glu-L-Lys-D-Ala-D-Ala)](n)-di-trans,octa-cis-undecaprenyl diphosphate + beta-D-GlcNAc-(1-&gt;4)-Mur2Ac(oyl-L-Ala-gamma-D-Glu-L-Lys-D-Ala-D-Ala)-di-trans,octa-cis-undecaprenyl diphosphate = [GlcNAc-(1-&gt;4)-Mur2Ac(oyl-L-Ala-gamma-D-Glu-L-Lys-D-Ala-D-Ala)](n+1)-di-trans,octa-cis-undecaprenyl diphosphate + di-trans,octa-cis-undecaprenyl diphosphate + H(+). It functions in the pathway cell wall biogenesis; peptidoglycan biosynthesis. Peptidoglycan polymerase that catalyzes glycan chain elongation from lipid-linked precursors. This Pectobacterium atrosepticum (strain SCRI 1043 / ATCC BAA-672) (Erwinia carotovora subsp. atroseptica) protein is Biosynthetic peptidoglycan transglycosylase.